Consider the following 970-residue polypeptide: Cullin-4B (970 aa).

Residues 1-14 show a composition bias toward basic and acidic residues; the sequence is MSRSTRSKERREND. 2 disordered regions span residues 1 to 157 and 189 to 211; these read MSRS…SFCL and AEES…QQQQ. Phosphothreonine is present on Thr15. Residue Ser17 is modified to Phosphoserine. Over residues 36-57 the composition is skewed to pro residues; the sequence is PPRPPYPPLLPPVFPPPTPPPQ. The segment covering 78–98 has biased composition (low complexity); the sequence is SGFSSPNPSAASAAAQEVRSA. Polar residues predominate over residues 99-109; it reads TDGNTSTTPPT. Position 106 is a phosphothreonine (Thr106). Ser110 is subject to Phosphoserine. The Nuclear localization signal motif lies at 112–115; sequence KKRK. Residues 117–126 are compositionally biased toward low complexity; sequence NSSSSSSNSS. Residues 146–155 are compositionally biased toward polar residues; sequence DSASPSTSSF. Phosphoserine is present on residues Ser154 and Ser200. Low complexity predominate over residues 192 to 211; it reads SSSSSSSSSPTAATSQQQQQ. Thr202 carries the post-translational modification Phosphothreonine. A Glycyl lysine isopeptide (Lys-Gly) (interchain with G-Cter in ubiquitin) cross-link involves residue Lys247. Ser250 is modified (phosphoserine). A Cullin neddylation domain is found at 902–962; it reads DRQYQIDAAI…RDYMERDKEN (61 aa). A Glycyl lysine isopeptide (Lys-Gly) (interchain with G-Cter in NEDD8) cross-link involves residue Lys916.

Belongs to the cullin family. As to quaternary structure, component of multiple DCX (DDB1-CUL4-X-box) E3 ubiquitin-protein ligase complexes that seem to be formed of DDB1, CUL4A or CUL4B, RBX1 and a variable substrate recognition component which seems to belong to a protein family described as DCAF (Ddb1- and Cul4-associated factor) or CDW (CUL4-DDB1-associated WD40-repeat) proteins. Component of the DCX(DTL) complex with the putative substrate recognition component DTL. Component of the DCX(DDB2) complex with the putative substrate recognition component DDB2. Component of DCX complexes part of the DesCEND (destruction via C-end degrons) pathway, which contain either TRPC4AP or DCAF12 as substrate-recognition component. Component of the DCX(AMBRA1) complex with the substrate recognition component AMBRA1. Part of a complex with RBX1 and TIP120A/CAND1. Component of the DCX(WDR77) complex, composed of Cul4b, Ddb1, Wdr77 and Rbx1. Interacts with RBX1, GRWD1, MLST8, SMU1, TLE2, TLE3, DCAF1, DDA1, DCAF6, DCAF17, DDB2, DCAF8, TIP120A/CAND1 and TMEM113. Interacts with cyclin E (CCNE1 or CCNE2) and with importins alpha-1 (KPNA2), alpha-3 (KPNA4), alpha-5 (KPNA1) and beta-1 (KPNB1). May interact with WDR26, WDR51B, SNRNP40, WDR61, WDR76 and WDR5. Interacts (unneddylated form) with DCUN1D1, DCUN1D2, DCUN1D3, DCUN1D4 and DCUN1D5; these interactions promote the cullin neddylation. Post-translationally, neddylated. Deneddylated via its interaction with the COP9 signalosome (CSN) complex. In terms of tissue distribution, expressed in oocytes (at protein level).

It is found in the cytoplasm. Its subcellular location is the nucleus. The protein operates within protein modification; protein ubiquitination. Functionally, core component of multiple cullin-RING-based E3 ubiquitin-protein ligase complexes which mediate the ubiquitination and subsequent proteasomal degradation of target proteins. The functional specificity of the E3 ubiquitin-protein ligase complex depends on the variable substrate recognition subunit. CUL4B may act within the complex as a scaffold protein, contributing to catalysis through positioning of the substrate and the ubiquitin-conjugating enzyme. Plays a role as part of the E3 ubiquitin-protein ligase complex in polyubiquitination of CDT1, histone H2A, histone H3 and histone H4 in response to radiation-induced DNA damage. Targeted to UV damaged chromatin by DDB2 and may be important for DNA repair and DNA replication. A number of DCX complexes (containing either TRPC4AP or DCAF12 as substrate-recognition component) are part of the DesCEND (destruction via C-end degrons) pathway, which recognizes a C-degron located at the extreme C terminus of target proteins, leading to their ubiquitination and degradation. The DCX(AMBRA1) complex is a master regulator of the transition from G1 to S cell phase by mediating ubiquitination of phosphorylated cyclin-D (CCND1, CCND2 and CCND3). The DCX(AMBRA1) complex also acts as a regulator of Cul5-RING (CRL5) E3 ubiquitin-protein ligase complexes by mediating ubiquitination and degradation of Elongin-C (ELOC) component of CRL5 complexes. Required for ubiquitination of cyclin E (CCNE1 or CCNE2), and consequently, normal G1 cell cycle progression. Component of the DCX(WDR77) complex, which mediates ubiquitination and degradation of Irgm1 in intestinal cells. Regulates the mammalian target-of-rapamycin (mTOR) pathway involved in control of cell growth, size and metabolism. Specific CUL4B regulation of the mTORC1-mediated pathway is dependent upon 26S proteasome function and requires interaction between CUL4B and MLST8. With CUL4A, contributes to ribosome biogenesis. In Mus musculus (Mouse), this protein is Cullin-4B.